We begin with the raw amino-acid sequence, 560 residues long: 2-hydroxyacyl-CoA lyase (560 aa).

Glutamate 49 provides a ligand contact to thiamine diphosphate. Mg(2+) contacts are provided by aspartate 446 and asparagine 473. The Peroxisomal target signal 1 (PTS1) motif lies at 558–560 (PRL).

Belongs to the TPP enzyme family. Requires Mg(2+) as cofactor. The cofactor is thiamine diphosphate.

Its subcellular location is the cytoplasm. It localises to the peroxisome matrix. It catalyses the reaction an (R)-2-hydroxy-long-chain-fatty acyl-CoA = a long-chain fatty aldehyde + formyl-CoA. The enzyme catalyses a 2-hydroxy-3-methyl fatty acyl-CoA = a 2-methyl-branched fatty aldehyde + formyl-CoA. Its function is as follows. Catalyzes a carbon-carbon cleavage reaction; cleaves a 2-hydroxy-3-methylacyl-CoA into formyl-CoA and a 2-methyl-branched fatty aldehyde. The chain is 2-hydroxyacyl-CoA lyase from Saccharomyces cerevisiae (strain ATCC 204508 / S288c) (Baker's yeast).